The following is an 84-amino-acid chain: Putative membrane protein insertion efficiency factor (84 aa).

Positions 64-84 are disordered; sequence GGSGYDPPPPRHQPRKWKCEE. The span at 75–84 shows a compositional bias: basic residues; that stretch reads HQPRKWKCEE.

This sequence belongs to the UPF0161 family.

The protein resides in the cell inner membrane. Could be involved in insertion of integral membrane proteins into the membrane. The polypeptide is Putative membrane protein insertion efficiency factor (Caulobacter vibrioides (strain ATCC 19089 / CIP 103742 / CB 15) (Caulobacter crescentus)).